A 172-amino-acid chain; its full sequence is Methylated-DNA--protein-cysteine methyltransferase (172 aa).

The active-site Nucleophile; methyl group acceptor is Cys-142.

The protein belongs to the MGMT family.

It is found in the cytoplasm. It carries out the reaction a 6-O-methyl-2'-deoxyguanosine in DNA + L-cysteinyl-[protein] = S-methyl-L-cysteinyl-[protein] + a 2'-deoxyguanosine in DNA. The enzyme catalyses a 4-O-methyl-thymidine in DNA + L-cysteinyl-[protein] = a thymidine in DNA + S-methyl-L-cysteinyl-[protein]. Its function is as follows. Involved in the cellular defense against the biological effects of O6-methylguanine (O6-MeG) and O4-methylthymine (O4-MeT) in DNA. Repairs the methylated nucleobase in DNA by stoichiometrically transferring the methyl group to a cysteine residue in the enzyme. This is a suicide reaction: the enzyme is irreversibly inactivated. The protein is Methylated-DNA--protein-cysteine methyltransferase of Pyrococcus abyssi (strain GE5 / Orsay).